A 245-amino-acid chain; its full sequence is Probable phosphatase KPN78578_10290 (245 aa).

His-7, His-9, His-15, His-40, Glu-73, His-101, His-131, Asp-192, and His-194 together coordinate Zn(2+).

This sequence belongs to the PHP family. In terms of assembly, homotrimer. The cofactor is Zn(2+).

The polypeptide is Probable phosphatase KPN78578_10290 (Klebsiella pneumoniae subsp. pneumoniae (strain ATCC 700721 / MGH 78578)).